Reading from the N-terminus, the 318-residue chain is Type II methyltransferase M.HaeII (318 aa).

Residues 4-304 (YKTIDLFAGI…GSMINSLNMA (301 aa)) enclose the SAM-dependent MTase C5-type domain. Residue Cys-73 is part of the active site.

This sequence belongs to the class I-like SAM-binding methyltransferase superfamily. C5-methyltransferase family.

The catalysed reaction is a 2'-deoxycytidine in DNA + S-adenosyl-L-methionine = a 5-methyl-2'-deoxycytidine in DNA + S-adenosyl-L-homocysteine + H(+). Functionally, a methylase, recognizes the double-stranded sequence 5'-RGCGCY-3', methylates C-? on both strands, and protects the DNA from cleavage by the HaeII endonuclease. This Haemophilus aegyptius protein is Type II methyltransferase M.HaeII (haeIIM).